Here is a 260-residue protein sequence, read N- to C-terminus: Snake venom serine protease KN5 (260 aa).

Positions 1–18 (MVLIRVLANLLILQLSYA) are cleaved as a signal peptide. Residues 19 to 24 (QKSSEL) constitute a propeptide that is removed on maturation. The region spanning 25 to 251 (VIGGDECNIN…HLDWIQSIIA (227 aa)) is the Peptidase S1 domain. Intrachain disulfides connect C31–C165, C100–C258, C144–C212, C176–C191, and C202–C227. Catalysis depends on H67, which acts as the Charge relay system. N105 carries an N-linked (GlcNAc...) asparagine glycan. The Charge relay system role is filled by D112. N124 and N172 each carry an N-linked (GlcNAc...) asparagine glycan. S206 functions as the Charge relay system in the catalytic mechanism. Residues N213 and N255 are each glycosylated (N-linked (GlcNAc...) asparagine).

Belongs to the peptidase S1 family. Snake venom subfamily. In terms of assembly, monomer. As to expression, expressed by the venom gland.

It localises to the secreted. Functionally, snake venom serine protease that may act in the hemostasis system of the prey. This chain is Snake venom serine protease KN5, found in Trimeresurus stejnegeri (Chinese green tree viper).